Here is a 503-residue protein sequence, read N- to C-terminus: REST corepressor 2 (503 aa).

The disordered stretch occupies residues 1 to 62; that stretch reads MPSVMEKSHG…IPECKPDNTS (62 aa). The region spanning 41–126 is the ELM2 domain; sequence SMIRVGSDYQ…RSLADLANFT (86 aa). Positions 127 to 178 constitute an SANT 1 domain; it reads PFPEEWSVEDKVLFEQAFSFHGKSFQRIQQMLPEKLIPSLVKYYYSWKKTRS. Coiled coils occupy residues 182–206 and 286–314; these read VMDRQARRLQAKREEGMEEVEDQIK and QLETQLISLKRQVQNIKQMNSSLKESLEG. The SANT 2 domain maps to 327–378; it reads KLNARWTTDEQLLAVQAVRKYGKDFQAISEVLGNKTPSQVKTFFISYRRRFN. Residues 385 to 503 are disordered; the sequence is EWEAEQEPSP…VGSHAESTFS (119 aa). Positions 399–412 are enriched in polar residues; it reads TDMSNKTSGSSQTP. The span at 423 to 442 shows a compositional bias: low complexity; that stretch reads SVSSSSQPAPPAAAAAASLS.

The protein belongs to the CoREST family.

Its subcellular location is the nucleus. In terms of biological role, may act as a component of a corepressor complex that represses transcription. This Xenopus laevis (African clawed frog) protein is REST corepressor 2 (rcor2).